Consider the following 172-residue polypeptide: Small ribosomal subunit protein uS5 (172 aa).

In terms of domain architecture, S5 DRBM spans 17-80; sequence LREKMISVNR…EQARRNMFKV (64 aa).

This sequence belongs to the universal ribosomal protein uS5 family. As to quaternary structure, part of the 30S ribosomal subunit. Contacts proteins S4 and S8.

Functionally, with S4 and S12 plays an important role in translational accuracy. Its function is as follows. Located at the back of the 30S subunit body where it stabilizes the conformation of the head with respect to the body. The protein is Small ribosomal subunit protein uS5 of Burkholderia pseudomallei (strain 1106a).